Reading from the N-terminus, the 154-residue chain is UPF0178 protein ABC1688 (154 aa).

The protein belongs to the UPF0178 family.

The chain is UPF0178 protein ABC1688 from Shouchella clausii (strain KSM-K16) (Alkalihalobacillus clausii).